We begin with the raw amino-acid sequence, 250 residues long: DNA polymerase sliding clamp (250 aa).

The protein belongs to the PCNA family. As to quaternary structure, homotrimer. The subunits circularize to form a toroid; DNA passes through its center. Replication factor C (RFC) is required to load the toroid on the DNA.

In terms of biological role, sliding clamp subunit that acts as a moving platform for DNA processing. Responsible for tethering the catalytic subunit of DNA polymerase and other proteins to DNA during high-speed replication. The chain is DNA polymerase sliding clamp from Methanococcus maripaludis (strain C5 / ATCC BAA-1333).